The sequence spans 63 residues: MARYRRHSRSRSRSRYRRRRRRRSRHRNRRRTYRRSRRHSRRRRGRRRGYSRRRYSRRGRRRY.

Residues 1–63 (MARYRRHSRS…RYSRRGRRRY (63 aa)) form a disordered region.

Belongs to the protamine P1 family. In terms of tissue distribution, testis.

Its subcellular location is the nucleus. It is found in the chromosome. Its function is as follows. Protamines substitute for histones in the chromatin of sperm during the haploid phase of spermatogenesis. They compact sperm DNA into a highly condensed, stable and inactive complex. The protein is Sperm protamine P1 (PRM1) of Pseudantechinus macdonnellensis (Fat-tailed marsupial mouse).